The primary structure comprises 549 residues: Chaperonin GroEL (549 aa).

ATP is bound by residues 30–33 (TLGP), Lys-51, 87–91 (DGTTT), Gly-415, and Asp-497.

Belongs to the chaperonin (HSP60) family. In terms of assembly, forms a cylinder of 14 subunits composed of two heptameric rings stacked back-to-back. Interacts with the co-chaperonin GroES.

It is found in the cytoplasm. It catalyses the reaction ATP + H2O + a folded polypeptide = ADP + phosphate + an unfolded polypeptide.. Functionally, together with its co-chaperonin GroES, plays an essential role in assisting protein folding. The GroEL-GroES system forms a nano-cage that allows encapsulation of the non-native substrate proteins and provides a physical environment optimized to promote and accelerate protein folding. This chain is Chaperonin GroEL, found in Pectobacterium atrosepticum (strain SCRI 1043 / ATCC BAA-672) (Erwinia carotovora subsp. atroseptica).